Reading from the N-terminus, the 174-residue chain is uncharacterized protein (174 aa).

A disordered region spans residues 1–55 (MGCVVSKSDDIKNENESRQRNQASSSQQPSSSQTPSKQIGIAAKDSEEQPQEVSY). A lipid anchor (N-myristoyl glycine) is attached at Gly2. The segment covering 7-19 (KSDDIKNENESRQ) has biased composition (basic and acidic residues). The span at 20-38 (RNQASSSQQPSSSQTPSKQ) shows a compositional bias: low complexity.

This is an uncharacterized protein from Dictyostelium discoideum (Social amoeba).